We begin with the raw amino-acid sequence, 340 residues long: Replication factor C subunit 2 (340 aa).

Residue 59–66 participates in ATP binding; it reads GSPGTGKT.

Belongs to the activator 1 small subunits family. As to quaternary structure, heteropentamer of subunits rfc1, rfc2, rfc3, rfc4 and rfc5 that forms a complex (RFC) with PCNA in the presence of ATP. Two other complexes exist where rfc1 can be replaced by either ctf18 or elg1 to form the ctf18-RFC or the elg1-RFC complexes respectively.

It localises to the nucleus. In terms of biological role, the elongation of primed DNA templates by DNA polymerase delta and epsilon requires the action of the accessory proteins PCNA and activator 1. Subunit 2 binds ATP and single-stranded DNA. The polypeptide is Replication factor C subunit 2 (rfc2) (Schizosaccharomyces pombe (strain 972 / ATCC 24843) (Fission yeast)).